The sequence spans 520 residues: Mitogen-activated protein kinase kinase 3 (520 aa).

S69 carries the post-translational modification Phosphoserine. Residues 83-339 (MRVFGAIGSG…ADQLLSHPFI (257 aa)) enclose the Protein kinase domain. ATP-binding positions include 89 to 97 (IGSGASSVV) and K112. Catalysis depends on D207, which acts as the Proton acceptor. A Phosphoserine modification is found at S235. Phosphothreonine is present on residues T241 and T245. The 151-residue stretch at 366 to 516 (LADMLTIHYY…YFLAKQELYI (151 aa)) folds into the NTF2 domain.

The protein belongs to the protein kinase superfamily. STE Ser/Thr protein kinase family. MAP kinase kinase subfamily. As to quaternary structure, interacts with MPK1, MPK2 and MPK7. Interacts with P.syringae type III effector HopF2. Interacts with MPK14. Binds to MAPKKK17 and MAPKKK18. Binds to MAPKKK20. Post-translationally, phosphorylation at Ser-235 and Thr-241 by MAP kinase kinase kinases positively regulates kinase activity. Phosphorylated by MAPKKK20. As to expression, mostly expressed in leaves, and, to a lower extent, in roots, seedlings, flower buds, flowers and siliques.

The protein resides in the nucleus. Its subcellular location is the cytoplasm. The catalysed reaction is L-seryl-[protein] + ATP = O-phospho-L-seryl-[protein] + ADP + H(+). It carries out the reaction L-threonyl-[protein] + ATP = O-phospho-L-threonyl-[protein] + ADP + H(+). The enzyme catalyses L-tyrosyl-[protein] + ATP = O-phospho-L-tyrosyl-[protein] + ADP + H(+). MKK3-MPK6 module plays an important role in the jasmonate signal transduction pathway through the negative regulation of MYC2/JIN1 expression. Activates by phosphorylation the downstream MPK6, MPK7 and MPK8. MKK3-MPK7 module acts as a positive regulator of PR1 gene expression. MKK3-MPK8 module negatively regulates ROS accumulation through controlling expression of the RBOHD gene. Component of the abscisic acid (ABA) signaling pathway that may act as ABA signal transducer in the context of abiotic stresses. Activator of the C group MAP kinases. Activates MPK7 in response to ABA. Mitogen-activated protein kinase (MAPK) that is specifically regulated by MAPKKK20 and mediates signaling that regulates cortical microtubule functions. The protein is Mitogen-activated protein kinase kinase 3 of Arabidopsis thaliana (Mouse-ear cress).